The primary structure comprises 299 residues: tRNA dimethylallyltransferase (299 aa).

10–17 (GPTASGKS) contacts ATP. Residue 12 to 17 (TASGKS) participates in substrate binding.

This sequence belongs to the IPP transferase family. As to quaternary structure, monomer. Requires Mg(2+) as cofactor.

The catalysed reaction is adenosine(37) in tRNA + dimethylallyl diphosphate = N(6)-dimethylallyladenosine(37) in tRNA + diphosphate. Functionally, catalyzes the transfer of a dimethylallyl group onto the adenine at position 37 in tRNAs that read codons beginning with uridine, leading to the formation of N6-(dimethylallyl)adenosine (i(6)A). The chain is tRNA dimethylallyltransferase from Malacoplasma penetrans (strain HF-2) (Mycoplasma penetrans).